The primary structure comprises 79 residues: MARIGVENSLTDVQQALQQQGHEVVTLNSEQDAQGCDCCVVTGQDSNVMGIADTSIKGSVITAHGLTTDEICQQVESRT.

The protein belongs to the UPF0180 family.

The polypeptide is UPF0180 protein BCB4264_A1446 (Bacillus cereus (strain B4264)).